The chain runs to 206 residues: Type III pantothenate kinase (206 aa).

Residue 5-12 coordinates ATP; sequence DIGNTFLH. Substrate is bound by residues Y69 and 73–76; that span reads GVDR. Residue D75 is the Proton acceptor of the active site. A K(+)-binding site is contributed by D90. An ATP-binding site is contributed by S93. Residue T145 participates in substrate binding.

Belongs to the type III pantothenate kinase family. In terms of assembly, homodimer. The cofactor is NH4(+). It depends on K(+) as a cofactor.

Its subcellular location is the cytoplasm. It carries out the reaction (R)-pantothenate + ATP = (R)-4'-phosphopantothenate + ADP + H(+). It functions in the pathway cofactor biosynthesis; coenzyme A biosynthesis; CoA from (R)-pantothenate: step 1/5. Its function is as follows. Catalyzes the phosphorylation of pantothenate (Pan), the first step in CoA biosynthesis. This Helicobacter hepaticus (strain ATCC 51449 / 3B1) protein is Type III pantothenate kinase.